We begin with the raw amino-acid sequence, 515 residues long: Maturase K (515 aa).

This sequence belongs to the intron maturase 2 family. MatK subfamily.

The protein localises to the plastid. The protein resides in the chloroplast. Functionally, usually encoded in the trnK tRNA gene intron. Probably assists in splicing its own and other chloroplast group II introns. The sequence is that of Maturase K from Picea engelmannii (Engelmann's spruce).